The following is a 630-amino-acid chain: Golgi apyrase (630 aa).

The Lumenal segment spans residues 1–500 (MLIENTNDRF…RKQSSSLSNK (500 aa)). Catalysis depends on Glu-152, which acts as the Proton acceptor. The helical transmembrane segment at 501–517 (GFLMWFAIICCIFYLIF) threads the bilayer. Topologically, residues 518–630 (HRSHIIRRRF…SKFKDSRLYD (113 aa)) are cytoplasmic. The disordered stretch occupies residues 586–606 (SSATMQREHEPQRTASQSANL).

It belongs to the GDA1/CD39 NTPase family. Interacts with activator subunit VMA13 of vacuolar H(+)-ATPase. Interacts with CDC55; this interaction is disrupted by adenovirus E4orf4, which remains associated with both YND1 and CDC55. The cofactor is Ca(2+). It depends on Mg(2+) as a cofactor. Requires Mn(2+) as cofactor.

The protein localises to the golgi apparatus. It localises to the membrane. The catalysed reaction is a ribonucleoside 5'-triphosphate + 2 H2O = a ribonucleoside 5'-phosphate + 2 phosphate + 2 H(+). It participates in protein modification; protein glycosylation. Activity is inhibited both by interaction with VMA13 and by V-ATPase acidification of the lumen. The activity of VMA13 is not required for YND1 inhibition. Functionally, catalyzes the hydrolysis of phosphoanhydride bonds of nucleoside tri- and di-phosphates. Has equal high activity toward ADP/ATP, GDP/GTP, and UDP/UTP and approximately 50% less toward CDP/CTP and thiamine pyrophosphate. Has no activity toward GMP. Required for Golgi glycosylation and cell wall integrity. Together with CDC55, required for adenovirus E4orf4 (early region 4 open reading frame 4) induced toxicity, the apyrase activity is not required for this function. Plays a role in sphingolipid synthesis. The protein is Golgi apyrase (YND1) of Saccharomyces cerevisiae (strain ATCC 204508 / S288c) (Baker's yeast).